A 36-amino-acid polypeptide reads, in one-letter code: Photosystem I reaction center subunit VIII (36 aa).

A helical transmembrane segment spans residues 9-29; sequence ISVPLVGLVFPAITMVLSFIY.

This sequence belongs to the PsaI family.

The protein resides in the plastid. Its subcellular location is the chloroplast thylakoid membrane. May help in the organization of the PsaL subunit. The sequence is that of Photosystem I reaction center subunit VIII from Huperzia lucidula (Shining clubmoss).